A 598-amino-acid chain; its full sequence is UvrABC system protein C (598 aa).

Residues 14-91 (DSPGCYLHKD…IQKNMPKYNI (78 aa)) enclose the GIY-YIG domain. Positions 196 to 231 (DKIIEDLRSKMLAASEEMAFERAAEYRDLISGIATM) constitute a UVR domain.

This sequence belongs to the UvrC family. Interacts with UvrB in an incision complex.

The protein resides in the cytoplasm. In terms of biological role, the UvrABC repair system catalyzes the recognition and processing of DNA lesions. UvrC both incises the 5' and 3' sides of the lesion. The N-terminal half is responsible for the 3' incision and the C-terminal half is responsible for the 5' incision. This Streptococcus pyogenes serotype M5 (strain Manfredo) protein is UvrABC system protein C.